A 160-amino-acid chain; its full sequence is 2-amino-4-hydroxy-6-hydroxymethyldihydropteridine pyrophosphokinase (160 aa).

Belongs to the HPPK family.

The catalysed reaction is 6-hydroxymethyl-7,8-dihydropterin + ATP = (7,8-dihydropterin-6-yl)methyl diphosphate + AMP + H(+). The protein operates within cofactor biosynthesis; tetrahydrofolate biosynthesis; 2-amino-4-hydroxy-6-hydroxymethyl-7,8-dihydropteridine diphosphate from 7,8-dihydroneopterin triphosphate: step 4/4. Its function is as follows. Catalyzes the transfer of pyrophosphate from adenosine triphosphate (ATP) to 6-hydroxymethyl-7,8-dihydropterin, an enzymatic step in folate biosynthesis pathway. The chain is 2-amino-4-hydroxy-6-hydroxymethyldihydropteridine pyrophosphokinase (folK) from Aquifex aeolicus (strain VF5).